A 286-amino-acid polypeptide reads, in one-letter code: Polyamine aminopropyltransferase (286 aa).

The 234-residue stretch at 5 to 238 (PLWHETLHDH…GIMTFAWASD (234 aa)) folds into the PABS domain. Glutamine 33 serves as a coordination point for S-methyl-5'-thioadenosine. 2 residues coordinate spermidine: histidine 64 and aspartate 88. S-methyl-5'-thioadenosine contacts are provided by residues glutamate 108 and 140-141 (DG). The Proton acceptor role is filled by aspartate 158. Spermidine is bound at residue 158–161 (DCTD). Proline 165 serves as a coordination point for S-methyl-5'-thioadenosine.

The protein belongs to the spermidine/spermine synthase family. As to quaternary structure, homodimer or homotetramer.

The protein localises to the cytoplasm. It carries out the reaction S-adenosyl 3-(methylsulfanyl)propylamine + putrescine = S-methyl-5'-thioadenosine + spermidine + H(+). Its pathway is amine and polyamine biosynthesis; spermidine biosynthesis; spermidine from putrescine: step 1/1. In terms of biological role, catalyzes the irreversible transfer of a propylamine group from the amino donor S-adenosylmethioninamine (decarboxy-AdoMet) to putrescine (1,4-diaminobutane) to yield spermidine. The protein is Polyamine aminopropyltransferase of Klebsiella pneumoniae (strain 342).